Consider the following 198-residue polypeptide: RNA-free ribonuclease P (198 aa).

It belongs to the HARP family.

It carries out the reaction Endonucleolytic cleavage of RNA, removing 5'-extranucleotides from tRNA precursor.. Functionally, RNA-free RNase P that catalyzes the removal of the 5'-leader sequence from pre-tRNA to produce the mature 5'-terminus. The polypeptide is RNA-free ribonuclease P (Thermococcus kodakarensis (strain ATCC BAA-918 / JCM 12380 / KOD1) (Pyrococcus kodakaraensis (strain KOD1))).